The following is a 210-amino-acid chain: Chaperone protein TorD (210 aa).

It belongs to the TorD/DmsD family. TorD subfamily.

It is found in the cytoplasm. Involved in the biogenesis of TorA. Acts on TorA before the insertion of the molybdenum cofactor and, as a result, probably favors a conformation of the apoenzyme that is competent for acquiring the cofactor. This chain is Chaperone protein TorD, found in Salmonella agona (strain SL483).